The following is a 372-amino-acid chain: Ciliary neurotrophic factor receptor subunit alpha (372 aa).

Positions 1 to 22 (MAAPVPWACCAVLAAAAAVVYA) are cleaved as a signal peptide. Residues 27-104 (PQEAPHVQYE…WHLRHQVLLH (78 aa)) form the Ig-like C2-type domain. Cysteine 46 and cysteine 89 are joined by a disulfide. Asparagine 60, asparagine 70, asparagine 142, and asparagine 190 each carry an N-linked (GlcNAc...) asparagine glycan. Fibronectin type-III domains lie at 108–205 (PPRE…VKPD) and 206–306 (PPEN…TEEP). A WSXWS motif motif is present at residues 290–294 (WSDWS). Residues 301-340 (PWTEEPRHLTTEAQAAETTTSTTSSLAPPPTTKICDPGEL) are disordered. A compositionally biased stretch (low complexity) spans 311 to 326 (TEAQAAETTTSTTSSL). Serine 342 is lipidated: GPI-anchor amidated serine. Positions 343 to 372 (GGGPSAPFLVSVPITLALAAAAATASSLLI) are cleaved as a propeptide — removed in mature form.

The protein belongs to the type I cytokine receptor family. Type 3 subfamily. In terms of assembly, forms a heterotrimer with LIFR and IL6ST. Interacts with heterodimeric neurotropic cytokine composed of CLCF1/CLC and CRLF1/CLF-1. Either alone or in complex with the heterodimer CLCF1-CRLF1 interacts with SORL1; this interaction may promote internalization and lysosomal degradation. Component of a receptor complex composed of IL6ST/GP130, IL27RA/WSX1 and CNTFR which interacts with the neuroprotective peptide humanin. In terms of tissue distribution, nervous system and skeletal muscle.

Its subcellular location is the cell membrane. In terms of biological role, binds to CNTF. The alpha subunit provides the receptor specificity. Receptor for heterodimeric neurotropic cytokine composed of CLCF1/CLC and CRLF1/CLF-1. Acts as a receptor for the neuroprotective peptide humanin as part of a complex with IL6ST/GP130 and IL27RA/WSX1. The protein is Ciliary neurotrophic factor receptor subunit alpha (CNTFR) of Homo sapiens (Human).